The sequence spans 390 residues: Exodeoxyribonuclease 7 large subunit (390 aa).

It belongs to the XseA family. In terms of assembly, heterooligomer composed of large and small subunits.

The protein localises to the cytoplasm. The catalysed reaction is Exonucleolytic cleavage in either 5'- to 3'- or 3'- to 5'-direction to yield nucleoside 5'-phosphates.. Bidirectionally degrades single-stranded DNA into large acid-insoluble oligonucleotides, which are then degraded further into small acid-soluble oligonucleotides. The sequence is that of Exodeoxyribonuclease 7 large subunit from Synechococcus sp. (strain CC9311).